The following is an 810-amino-acid chain: MEECLLHGRLHATIYEVDHLHAEGGRSGFLGSILANVEETIGVGKGETQLYATIDLEKARVGRTRKITKEPKNPKWFESFHIYCGHMAKHVIFTVKDANPIGATLIGRGYIPVEDILHGEEVDRWVDILDNEKNPIAGGSKIHVKLQYFGVEKDKNWNRGIKSAKFPGVPYTFFSQRRGCKVSLYQDAHIPGNFVPKIPLAGGKNYEPHRCWEDIFDAITNAKHLIYITGWSVYTEISLVRDSRRPKQGGDVTVGELLKKKASEGVKVILLVWDDRTSVDLLKKDGLMATHDEETENFFRGTDVNCILCPRNPDDGGSIVQNLQISTMFTHHQKIVVVDSEMPSGGSRSRRIVSFVGGLDLCDGRYDTPFHSLFRTLDTAHHDDFHQPNFTGAAITKGGPREPWHDIHCRLEGPIAWDVLYNFEQRWSRQGGKDILVKMRELGDIIIPPSPVLFSEDHDVWNVQLFRSIDGGAAAGFPDSPEAAAEAGLVSGKDNIIDRSIQDAYIHAIRRAKDFIYIENQYFLGSSFAWSADGIKPEEINALHLIPKELSLKIVSKIKAGEKFKVYVVVPMWPEGIPESGSVQAILDWQKRTMEMMYKDVIKALRENGLEGEDPRDYLTFFCLGNREVKKDGEYEPSEKPEPDTDYIRAQEARRFMIYVHTKMMIVDDEYIIIGSANINQRSMDGARDSEIAMGGYQPYHLSTRQPARGQIHGFRMSLWYEHLGMLDETFLDPSSQECIQKVNRVADKYWDLYSSESLEHDLPGHLLRYPIGIASEGNITELPGCEFFPDTKARILGVKSDYMPPILTT.

Residues 1 to 126 (MEECLLHGRL…LHGEEVDRWV (126 aa)) enclose the C2 domain. D187 contributes to the Ca(2+) binding site. In terms of domain architecture, PLD phosphodiesterase 1 spans 327 to 365 (TMFTHHQKIVVVDSEMPSGGSRSRRIVSFVGGLDLCDGR). Active-site residues include H332, K334, and D339. A 1,2-diacyl-sn-glycero-3-phosphate is bound at residue H332. Ca(2+) is bound by residues H371 and H405. A 1,2-diacyl-sn-glycero-3-phosphate contacts are provided by Q521 and H661. Residues 656–683 (FMIYVHTKMMIVDDEYIIIGSANINQRS) form the PLD phosphodiesterase 2 domain. Active-site residues include H661, K663, and D668. E722 serves as a coordination point for Ca(2+).

This sequence belongs to the phospholipase D family. C2-PLD subfamily. The cofactor is Ca(2+). In terms of tissue distribution, highly expressed in roots, stems and flowers, moderately in leaves, seedlings and siliques. Not detected in dry seeds.

The protein localises to the cytoplasm. It is found in the membrane. The protein resides in the vacuole. Its subcellular location is the cytoplasmic vesicle. It localises to the clathrin-coated vesicle. It catalyses the reaction a 1,2-diacyl-sn-glycero-3-phosphocholine + H2O = a 1,2-diacyl-sn-glycero-3-phosphate + choline + H(+). In terms of biological role, hydrolyzes glycerol-phospholipids at the terminal phosphodiesteric bond to generate phosphatidic acids (PA). Plays an important role in various cellular processes, including phytohormone action and response to stress, characterized by acidification of the cell. The protein is Phospholipase D alpha 2 of Arabidopsis thaliana (Mouse-ear cress).